An 80-amino-acid polypeptide reads, in one-letter code: uncharacterized protein (80 aa).

It belongs to the BolA/IbaG family.

This is an uncharacterized protein from Buchnera aphidicola subsp. Schizaphis graminum (strain Sg).